We begin with the raw amino-acid sequence, 157 residues long: Glutaredoxin-2, mitochondrial (157 aa).

The N-terminal 19 residues, 1–19 (MSWYRAASVGRRLVASGRI), are a transit peptide targeting the mitochondrion. The 101-residue stretch at 50-150 (VNQIQETISN…PLVHQCYLNK (101 aa)) folds into the Glutaredoxin domain. Cysteine 61 is a binding site for [2Fe-2S] cluster. Lysine 67 contacts glutathione. Cysteine 70 is subject to S-glutathionyl cysteine; alternate. The cysteines at positions 70 and 73 are disulfide-linked. Glutamine 102 and valine 114 together coordinate glutathione. Cysteine 146 lines the [2Fe-2S] cluster pocket.

The protein belongs to the glutaredoxin family. In terms of assembly, monomer; active form. Homodimer; inactive form. The homodimer is probably linked by 1 2Fe-2S cluster.

It is found in the mitochondrion. It localises to the nucleus. Its activity is regulated as follows. The 2Fe-2S present in the homodimer leads to inactivation of the enzyme. The 2Fe-2S may serve as a redox sensor: the presence of one-electron oxidants or reductants leading to the loss of the 2Fe-2S cluster, subsequent monomerization and activation of the enzyme. Its function is as follows. Glutathione-dependent oxidoreductase that facilitates the maintenance of mitochondrial redox homeostasis upon induction of apoptosis by oxidative stress. Involved in response to hydrogen peroxide and regulation of apoptosis caused by oxidative stress. Acts as a very efficient catalyst of monothiol reactions because of its high affinity for protein glutathione-mixed disulfides. Can receive electrons not only from glutathione (GSH), but also from thioredoxin reductase supporting both monothiol and dithiol reactions. Efficiently catalyzes both glutathionylation and deglutathionylation of mitochondrial complex I, which in turn regulates the superoxide production by the complex. Overexpression decreases the susceptibility to apoptosis and prevents loss of cardiolipin and cytochrome c release. The polypeptide is Glutaredoxin-2, mitochondrial (Glrx2) (Rattus norvegicus (Rat)).